A 132-amino-acid chain; its full sequence is Fatty acid-binding protein, adipocyte (132 aa).

At C2 the chain carries N-acetylcysteine. Position 13 is a phosphoserine (S13). Y20 is modified (phosphotyrosine; by Tyr-kinases). The Nuclear localization signal motif lies at 22–32 (KEVGVGFATRK). Residue 127–129 (RVY) participates in a fatty acid binding.

It belongs to the calycin superfamily. Fatty-acid binding protein (FABP) family. Monomer. Homodimer. Interacts with PPARG.

Its subcellular location is the cytoplasm. It is found in the nucleus. In terms of biological role, lipid transport protein in adipocytes. Binds both long chain fatty acids and retinoic acid. Delivers long-chain fatty acids and retinoic acid to their cognate receptors in the nucleus. This is Fatty acid-binding protein, adipocyte (FABP4) from Cervus elaphus (Red deer).